The sequence spans 1247 residues: Respiratory nitrate reductase 1 alpha chain (1247 aa).

A 4Fe-4S Mo/W bis-MGD-type domain is found at 43 to 107 (DKIVRSTHGV…SYSWYLYSAN (65 aa)). The [4Fe-4S] cluster site is built by His50, Cys54, Cys58, and Cys93. Asp223 lines the Mo-bis(molybdopterin guanine dinucleotide) pocket.

This sequence belongs to the prokaryotic molybdopterin-containing oxidoreductase family. Dimer of heterotrimers each composed of an alpha, a beta and a gamma chain. Alpha and beta are catalytic chains; gamma chains are involved in binding the enzyme complex to the cytoplasmic membrane. Interacts with the NarJ chaperone. It depends on [4Fe-4S] cluster as a cofactor. Mo-bis(molybdopterin guanine dinucleotide) is required as a cofactor.

The protein localises to the cell membrane. It catalyses the reaction nitrate + a quinol = a quinone + nitrite + H2O. The nitrate reductase enzyme complex allows E.coli to use nitrate as an electron acceptor during anaerobic growth. The alpha chain is the actual site of nitrate reduction. The protein is Respiratory nitrate reductase 1 alpha chain (narG) of Escherichia coli (strain K12).